We begin with the raw amino-acid sequence, 499 residues long: Rhodopsin, GQ-coupled (499 aa).

Residues 1–50 (MADNKSTLPGLPDINGTLNRSMTPNTGWEGPYDMSVHLHWTQFPPVTEEW) are Extracellular-facing. N4, N15, and N19 each carry an N-linked (GlcNAc...) asparagine glycan. A helical membrane pass occupies residues 51-75 (HYIIGVYITIVGLLGIMGNTTVVYI). Over 76–87 (FSNTKSLRSPSN) the chain is Cytoplasmic. A helical membrane pass occupies residues 88–114 (LFVVNLAVSDLIFSAVNGFPLLTVSSF). Over 115–128 (HQKWIFGSLFCQLY) the chain is Extracellular. Residues C125 and C203 are joined by a disulfide bond. Residues 129-148 (GFVGGVFGLMSINTLTAISI) form a helical membrane-spanning segment. Residues 149 to 168 (DRYVVITKPLQASQTMTRRK) are Cytoplasmic-facing. Residues 169–192 (VHLMIVIVWVLSILLSIPPFFGWG) form a helical membrane-spanning segment. Residues 193-216 (AYIPEGFQTSCTFDYLTKTARTRT) are Extracellular-facing. A helical membrane pass occupies residues 217-244 (YIVVLYLFGFLIPLIIIGVCYVLIIRGV). Topologically, residues 245 to 278 (RRHDQKMLTITRSMKTEDARANNKRARSELRISK) are cytoplasmic. Residues 279–302 (IAMTVTCLFIISWSPYAIIALIAQ) traverse the membrane as a helical segment. Residues 303 to 310 (FGPAHWIT) lie on the Extracellular side of the membrane. A helical membrane pass occupies residues 311–335 (PLVSELPMMLAKSSSMHNPVVYALS). K322 is subject to N6-(retinylidene)lysine. At 336–499 (HPKFRKALYQ…QRVNGLTFNS (164 aa)) the chain is on the cytoplasmic side. S-palmitoyl cysteine attachment occurs at residues C353 and C354.

Belongs to the G-protein coupled receptor 1 family. Opsin subfamily. In terms of processing, phosphorylated on some or all of the serine and threonine residues present in the C-terminal region. As to expression, retina. Expressed in the depolarizing cell layer of the photoreceptor cells distant from the lens.

The protein localises to the membrane. Visual pigments such as rhodopsin and porphyropsin are light-absorbing molecules that mediate vision. Rhodopsin consists of an apoprotein, opsin, covalently linked to 11-cis-retinal. This receptor is coupled to the activation of phospholipase C. Porphyropsin consists of opsin covalently linked to 11-cis 3,4-didehydroretinal. This is Rhodopsin, GQ-coupled (SCOP1) from Mizuhopecten yessoensis (Japanese scallop).